A 342-amino-acid chain; its full sequence is uncharacterized protein (342 aa).

This sequence belongs to the cycloisomerase 2 family.

This is an uncharacterized protein from Staphylococcus aureus (strain NCTC 8325 / PS 47).